The sequence spans 383 residues: Odorant receptor 94b (383 aa).

Topologically, residues 1 to 41 (MESTNRLSAIQTLLVIQRWIGLLKWENEGEDGVLTWLKRIY) are cytoplasmic. Residues 42 to 62 (PFVLHLPLTFTYIALMWYEAI) traverse the membrane as a helical segment. Residues 63–70 (TSSDFEEA) are Extracellular-facing. Residues 71-91 (GQVLYMSITELALVTKLLNIW) form a helical membrane-spanning segment. The Cytoplasmic segment spans residues 92–130 (YRRHEAASLIHELQHDPAFNLRNSEEIKFWQQNQRNFKR). The helical transmembrane segment at 131–151 (IFYWYIWGSLFVAVMGYISVF) threads the bilayer. The Extracellular portion of the chain corresponds to 152–174 (FQEDYELPFGYYVPFEWRTRERY). The helical transmembrane segment at 175-195 (FYAWGYNVVAMTLCCLSNILL) threads the bilayer. The Cytoplasmic segment spans residues 196–250 (DTLGCYFMFHIASLFRLLGMRLEALKNAAEEKARPELRRIFQLHTKVRRLTRECE). The helical transmembrane segment at 251–271 (VLVSPYVLSQVVFSAFIICFS) threads the bilayer. Residues 272 to 284 (AYRLVHMGFKQRP) lie on the Extracellular side of the membrane. Residues 285–305 (GLFVTTVQFVAVMIVQIFLPC) form a helical membrane-spanning segment. Over 306-358 (YYGNELTFHANALTNSVFGTNWLEYSVGTRKLLNCYMEFLKRPVKVRAGVFFE) the chain is Cytoplasmic. Residues 359-379 (IGLPIFVKTINNAYSFFALLL) form a helical membrane-spanning segment. Residues 380–383 (KISK) are Extracellular-facing.

It belongs to the insect chemoreceptor superfamily. Heteromeric odorant receptor channel (TC 1.A.69) family. Or2a subfamily. In terms of assembly, interacts with Orco. Complexes exist early in the endomembrane system in olfactory sensory neurons (OSNs), coupling these complexes to the conserved ciliary trafficking pathway.

It is found in the cell membrane. Odorant receptor which mediates acceptance or avoidance behavior, depending on its substrates. The odorant receptor repertoire encodes a large collection of odor stimuli that vary widely in identity, intensity, and duration. May form a complex with Orco to form odorant-sensing units, providing sensitive and prolonged odorant signaling and calcium permeability. This chain is Odorant receptor 94b (Or94b), found in Drosophila melanogaster (Fruit fly).